A 129-amino-acid polypeptide reads, in one-letter code: Small ribosomal subunit protein uS11 (129 aa).

It belongs to the universal ribosomal protein uS11 family. In terms of assembly, part of the 30S ribosomal subunit. Interacts with proteins S7 and S18. Binds to IF-3.

Functionally, located on the platform of the 30S subunit, it bridges several disparate RNA helices of the 16S rRNA. Forms part of the Shine-Dalgarno cleft in the 70S ribosome. This Maridesulfovibrio salexigens (strain ATCC 14822 / DSM 2638 / NCIMB 8403 / VKM B-1763) (Desulfovibrio salexigens) protein is Small ribosomal subunit protein uS11.